The following is a 353-amino-acid chain: Biotin synthase (353 aa).

Positions 1–22 (MTACSTTPTTSATSAQPAAGSP) are enriched in low complexity. A disordered region spans residues 1–30 (MTACSTTPTTSATSAQPAAGSPLQWHARPS). Residues 72–299 (GDIELATLLS…TARVRLSAGR (228 aa)) form the Radical SAM core domain. [4Fe-4S] cluster-binding residues include Cys-87, Cys-91, and Cys-94. The [2Fe-2S] cluster site is built by Cys-131, Cys-162, Cys-222, and Arg-294.

The protein belongs to the radical SAM superfamily. Biotin synthase family. Homodimer. [4Fe-4S] cluster serves as cofactor. Requires [2Fe-2S] cluster as cofactor.

The catalysed reaction is (4R,5S)-dethiobiotin + (sulfur carrier)-SH + 2 reduced [2Fe-2S]-[ferredoxin] + 2 S-adenosyl-L-methionine = (sulfur carrier)-H + biotin + 2 5'-deoxyadenosine + 2 L-methionine + 2 oxidized [2Fe-2S]-[ferredoxin]. It participates in cofactor biosynthesis; biotin biosynthesis; biotin from 7,8-diaminononanoate: step 2/2. In terms of biological role, catalyzes the conversion of dethiobiotin (DTB) to biotin by the insertion of a sulfur atom into dethiobiotin via a radical-based mechanism. In Delftia acidovorans (strain DSM 14801 / SPH-1), this protein is Biotin synthase.